Here is a 412-residue protein sequence, read N- to C-terminus: Adenylosuccinate synthetase (412 aa).

GTP-binding positions include glycine 12–lysine 18 and glycine 40–glutamate 42. Aspartate 13 (proton acceptor) is an active-site residue. Mg(2+)-binding residues include aspartate 13 and glycine 40. IMP-binding positions include aspartate 13 to lysine 16, asparagine 38 to histidine 41, arginine 134, asparagine 212, threonine 227, and arginine 291. Residue histidine 41 is the Proton donor of the active site. Position 287–293 (threonine 287–arginine 293) interacts with substrate. Residues arginine 293, lysine 318–aspartate 320, and glycine 400–glycine 402 contribute to the GTP site.

This sequence belongs to the adenylosuccinate synthetase family. In terms of assembly, homodimer. The cofactor is Mg(2+).

It is found in the cytoplasm. It catalyses the reaction IMP + L-aspartate + GTP = N(6)-(1,2-dicarboxyethyl)-AMP + GDP + phosphate + 2 H(+). It participates in purine metabolism; AMP biosynthesis via de novo pathway; AMP from IMP: step 1/2. Plays an important role in the de novo pathway and in the salvage pathway of purine nucleotide biosynthesis. Catalyzes the first committed step in the biosynthesis of AMP from IMP. This Fusarium vanettenii (strain ATCC MYA-4622 / CBS 123669 / FGSC 9596 / NRRL 45880 / 77-13-4) (Fusarium solani subsp. pisi) protein is Adenylosuccinate synthetase.